The chain runs to 295 residues: Acetylglutamate kinase (295 aa).

Residues 66–67 (GG), R88, and N193 each bind substrate.

Belongs to the acetylglutamate kinase family. ArgB subfamily.

It is found in the cytoplasm. The catalysed reaction is N-acetyl-L-glutamate + ATP = N-acetyl-L-glutamyl 5-phosphate + ADP. The protein operates within amino-acid biosynthesis; L-arginine biosynthesis; N(2)-acetyl-L-ornithine from L-glutamate: step 2/4. In terms of biological role, catalyzes the ATP-dependent phosphorylation of N-acetyl-L-glutamate. The protein is Acetylglutamate kinase of Rhizobium etli (strain CIAT 652).